The primary structure comprises 66 residues: uncharacterized protein (66 aa).

Transmembrane regions (helical) follow at residues 6 to 26 (KIIMILGAVLLIIGAVLHFVG) and 39 to 59 (VTFFFPVVTCIIISVVLSILL).

The protein localises to the cell membrane. This is an uncharacterized protein from Bacillus subtilis (strain 168).